A 367-amino-acid chain; its full sequence is Otolith matrix protein 1 (367 aa).

The N-terminal stretch at 1–23 (MDRLDRRLAATLLLFSFISFSTQ) is a signal peptide. The 337-residue stretch at 27-363 (ISWCVVSEAE…YTTVLQAFEC (337 aa)) folds into the Transferrin-like domain.

It belongs to the transferrin family. As to quaternary structure, interacts with OTOL1. As to expression, expressed in the sacculus during the day.

Its subcellular location is the secreted. In terms of biological role, required for normal otolith growth and deposition of otolin-1 in the otolith. The protein is Otolith matrix protein 1 (otomp) of Oncorhynchus mykiss (Rainbow trout).